We begin with the raw amino-acid sequence, 73 residues long: Mu-conotoxin SIIIA (73 aa).

An N-terminal signal peptide occupies residues 1-20 (MMSKLGVLLTVCPLLFPLTA). The disordered stretch occupies residues 20–40 (ALPPDGDQPADRPAERMQDDI). The propeptide occupies 21 to 49 (LPPDGDQPADRPAERMQDDISSDEHPLFD). Residues 28–40 (PADRPAERMQDDI) are compositionally biased toward basic and acidic residues. Residue Gln52 is modified to Pyrrolidone carboxylic acid. 3 cysteine pairs are disulfide-bonded: Cys54–Cys64, Cys55–Cys70, and Cys59–Cys71. Position 71 is a cysteine amide (Cys71).

This sequence belongs to the conotoxin M superfamily. As to expression, expressed by the venom duct.

Its subcellular location is the secreted. In terms of biological role, mu-conotoxins block voltage-gated sodium channels (Nav). This toxin moderately blocks rNav1.1/SCN1A, rNav1.2/SCN2A, rNav1.3/SCN3A, rNav1.4/SCN4A, and mNav1.6/SCN8A. This Conus striatus (Striated cone) protein is Mu-conotoxin SIIIA.